The sequence spans 155 residues: uncharacterized protein (155 aa).

Transmembrane regions (helical) follow at residues 33–53 (ITLL…LFLL) and 83–103 (IGAV…GIWV).

It to E.coli YdgK.

The protein localises to the cell membrane. This is an uncharacterized protein from Synechocystis sp. (strain ATCC 27184 / PCC 6803 / Kazusa).